A 286-amino-acid chain; its full sequence is Pyridoxal kinase PdxY (286 aa).

Substrate is bound by residues Ser-9 and 44-45; that span reads TQ. Residues Asp-111, Ala-143, Glu-148, Lys-181, and 208–211 each bind ATP; that span reads RPLV. Asp-222 is a binding site for substrate.

It belongs to the pyridoxine kinase family. PdxY subfamily. Homodimer. It depends on Mg(2+) as a cofactor.

The catalysed reaction is pyridoxal + ATP = pyridoxal 5'-phosphate + ADP + H(+). It functions in the pathway cofactor metabolism; pyridoxal 5'-phosphate salvage; pyridoxal 5'-phosphate from pyridoxal: step 1/1. Functionally, pyridoxal kinase involved in the salvage pathway of pyridoxal 5'-phosphate (PLP). Catalyzes the phosphorylation of pyridoxal to PLP. This Pectobacterium atrosepticum (strain SCRI 1043 / ATCC BAA-672) (Erwinia carotovora subsp. atroseptica) protein is Pyridoxal kinase PdxY.